A 368-amino-acid polypeptide reads, in one-letter code: tRNA-specific 2-thiouridylase MnmA (368 aa).

ATP-binding positions include 24-31 and L50; that span reads AMSGGVDS. C117 serves as the catalytic Nucleophile. The cysteines at positions 117 and 213 are disulfide-linked. G141 serves as a coordination point for ATP. The interaction with tRNA stretch occupies residues 163–165; it reads KDQ. The Cysteine persulfide intermediate role is filled by C213.

Belongs to the MnmA/TRMU family.

It localises to the cytoplasm. It catalyses the reaction S-sulfanyl-L-cysteinyl-[protein] + uridine(34) in tRNA + AH2 + ATP = 2-thiouridine(34) in tRNA + L-cysteinyl-[protein] + A + AMP + diphosphate + H(+). Its function is as follows. Catalyzes the 2-thiolation of uridine at the wobble position (U34) of tRNA, leading to the formation of s(2)U34. The protein is tRNA-specific 2-thiouridylase MnmA of Wolbachia pipientis subsp. Culex pipiens (strain wPip).